A 511-amino-acid chain; its full sequence is Histidine ammonia-lyase (511 aa).

A cross-link (5-imidazolinone (Ala-Gly)) is located at residues 142-144 (ASG). Serine 143 carries the post-translational modification 2,3-didehydroalanine (Ser).

The protein belongs to the PAL/histidase family. Contains an active site 4-methylidene-imidazol-5-one (MIO), which is formed autocatalytically by cyclization and dehydration of residues Ala-Ser-Gly.

Its subcellular location is the cytoplasm. It catalyses the reaction L-histidine = trans-urocanate + NH4(+). Its pathway is amino-acid degradation; L-histidine degradation into L-glutamate; N-formimidoyl-L-glutamate from L-histidine: step 1/3. The protein is Histidine ammonia-lyase of Brucella suis (strain ATCC 23445 / NCTC 10510).